Here is a 156-residue protein sequence, read N- to C-terminus: IFN signaling evasion protein OPG029 (156 aa).

Belongs to the orthopoxvirus OPG029 family. In terms of assembly, interacts with host TANK, TBKBP1 and AZI2; these interactions prevent interferon production. Interacts with host STAT2.

Functionally, prevents establishment of cellular antiviral state by blocking virus-induced phosphorylation and activation of interferon regulatory factors 3/IRF3 and 7/IRF7, transcription factors critical for the induction of interferons alpha and beta. This blockage is produced through the inhibition of host TBK1, by binding host TBK1 adapter proteins TBKBP1 and AZI2, thereby producing a strong inhibition of the phosphorylation and activation of IRF3 and IRF7. Also acts as an inhibitor of the cellular response to type I IFN by interacting with host STAT2. Mechanistically, exerts its inhibitory effect after host ISGF3 complex (composed of STAT1, STAT2 and IRF9) binding to the interferon stimulated response element (ISRE). The protein is IFN signaling evasion protein OPG029 (OPG029) of Variola virus (isolate Human/India/Ind3/1967) (VARV).